Reading from the N-terminus, the 476-residue chain is Proline--tRNA ligase (476 aa).

It belongs to the class-II aminoacyl-tRNA synthetase family. ProS type 3 subfamily. Homodimer.

It localises to the cytoplasm. It carries out the reaction tRNA(Pro) + L-proline + ATP = L-prolyl-tRNA(Pro) + AMP + diphosphate. Catalyzes the attachment of proline to tRNA(Pro) in a two-step reaction: proline is first activated by ATP to form Pro-AMP and then transferred to the acceptor end of tRNA(Pro). The chain is Proline--tRNA ligase from Cenarchaeum symbiosum (strain A).